Here is a 186-residue protein sequence, read N- to C-terminus: NADH-ubiquinone oxidoreductase 17.8 kDa subunit, mitochondrial (186 aa).

The N-terminal 26 residues, 1–26 (MSSFRLGVSRVARQVRAPCVRNTRRY), are a transit peptide targeting the mitochondrion. The interval 22-49 (NTRRYASDSHAPADHTHSAAGHGEHHHA) is disordered. A compositionally biased stretch (basic and acidic residues) spans 26-49 (YASDSHAPADHTHSAAGHGEHHHA). Residues 58-78 (LGTAFYVIFGAIPAFGALYYF) form a helical membrane-spanning segment.

In terms of assembly, complex I is composed of about 40 different subunits.

The protein localises to the mitochondrion inner membrane. It catalyses the reaction a ubiquinone + NADH + 5 H(+)(in) = a ubiquinol + NAD(+) + 4 H(+)(out). Its function is as follows. Transfer of electrons from NADH to the respiratory chain. The immediate electron acceptor for the enzyme is believed to be ubiquinone. In Neurospora crassa (strain ATCC 24698 / 74-OR23-1A / CBS 708.71 / DSM 1257 / FGSC 987), this protein is NADH-ubiquinone oxidoreductase 17.8 kDa subunit, mitochondrial (nuo17.8).